Consider the following 235-residue polypeptide: Urease accessory protein UreF (235 aa).

The protein belongs to the UreF family. In terms of assembly, ureD, UreF and UreG form a complex that acts as a GTP-hydrolysis-dependent molecular chaperone, activating the urease apoprotein by helping to assemble the nickel containing metallocenter of UreC. The UreE protein probably delivers the nickel.

It localises to the cytoplasm. Functionally, required for maturation of urease via the functional incorporation of the urease nickel metallocenter. The polypeptide is Urease accessory protein UreF (Pseudoalteromonas translucida (strain TAC 125)).